Reading from the N-terminus, the 332-residue chain is UPF0158 protein TC_0713 (332 aa).

Disordered regions lie at residues 196–215 and 291–332; these read ALNP…KVEA and LGYD…KARS. The segment covering 295-316 has biased composition (acidic residues); that stretch reads GDGDASDFFGEEYDDDDDDDDD. Positions 320–332 are enriched in basic residues; sequence KKAAKRGRKKARS.

It belongs to the UPF0158 family.

This is UPF0158 protein TC_0713 from Chlamydia muridarum (strain MoPn / Nigg).